Consider the following 341-residue polypeptide: Ribosomal RNA small subunit methyltransferase H (341 aa).

S-adenosyl-L-methionine-binding positions include glycine 47–tyrosine 49, aspartate 64, phenylalanine 91, aspartate 109, and glutamine 116. The disordered stretch occupies residues valine 292–proline 319.

This sequence belongs to the methyltransferase superfamily. RsmH family.

It is found in the cytoplasm. The enzyme catalyses cytidine(1402) in 16S rRNA + S-adenosyl-L-methionine = N(4)-methylcytidine(1402) in 16S rRNA + S-adenosyl-L-homocysteine + H(+). In terms of biological role, specifically methylates the N4 position of cytidine in position 1402 (C1402) of 16S rRNA. The protein is Ribosomal RNA small subunit methyltransferase H of Rhizobium meliloti (strain 1021) (Ensifer meliloti).